Here is a 284-residue protein sequence, read N- to C-terminus: AA14 family lytic polysaccharide monooxygenase B (284 aa).

The first 20 residues, 1–20 (MGYLSKLVTSVVFAIPLASA), serve as a signal peptide directing secretion. N-linked (GlcNAc...) asparagine glycans are attached at residues asparagine 42, asparagine 96, asparagine 142, and asparagine 183. Cysteine 197 and cysteine 218 are oxidised to a cystine.

The protein belongs to the polysaccharide monooxygenase AA14 family. Requires Cu(2+) as cofactor.

The protein resides in the secreted. Functionally, lytic polysaccharide monooxygenase (LPMO) that plays decomposes some specific network structures formed between cellulose and hemicellulose in the plant cell walls. Catalysis by LPMOs requires the reduction of the active-site copper from Cu(II) to Cu(I) by a reducing agent and H(2)O(2) or O(2) as a cosubstrate. The protein is AA14 family lytic polysaccharide monooxygenase B of Talaromyces rugulosus (Penicillium rugulosum).